Reading from the N-terminus, the 86-residue chain is Centromere protein W (86 aa).

Belongs to the CENP-W/WIP1 family. Heterodimer with CENPT; this dimer coassembles with CENPS-CENPX heterodimers at centromeres to form the tetrameric CENP-T-W-S-X complex, which is a subcomplex of the large constitutive centromere-associated network (CCAN, also known as the interphase centromere complex or ICEN). Interacts with NPM1.

Its subcellular location is the nucleus. The protein localises to the chromosome. The protein resides in the centromere. It is found in the kinetochore. It localises to the nucleus matrix. Its subcellular location is the nucleolus. In terms of biological role, component of the CENPA-NAC (nucleosome-associated) complex, a complex that plays a central role in assembly of kinetochore proteins, mitotic progression and chromosome segregation. The CENPA-NAC complex recruits the CENPA-CAD (nucleosome distal) complex and may be involved in incorporation of newly synthesized CENPA into centromeres. Part of a nucleosome-associated complex that binds specifically to histone H3-containing nucleosomes at the centromere, as opposed to nucleosomes containing CENPA. Component of the heterotetrameric CENP-T-W-S-X complex that binds and supercoils DNA, and plays an important role in kinetochore assembly. CENPW has a fundamental role in kinetochore assembly and function. It is one of the inner kinetochore proteins, with most further proteins binding downstream. Required for normal chromosome organization and normal progress through mitosis. This Rattus norvegicus (Rat) protein is Centromere protein W (Cenpw).